Consider the following 1055-residue polypeptide: DIS3-like exonuclease 2 (1055 aa).

Disordered stretches follow at residues 1-109 and 229-249; these read MKSA…SSPE and SAAK…KARQ. Positions 17 to 32 are enriched in basic residues; sequence HKKKRNRPQKQNRRSK. A compositionally biased stretch (basic and acidic residues) spans 39-59; it reads EDAHVEESLDGRDSSRSKAKD. Over residues 97-108 the composition is skewed to low complexity; sequence PRRSASPLLSSP. Mg(2+) contacts are provided by aspartate 488 and aspartate 497.

Belongs to the RNR ribonuclease family. DIS3L2 subfamily. Mg(2+) is required as a cofactor. Mn(2+) serves as cofactor. As to expression, widely expressed.

It is found in the cytoplasm. It localises to the P-body. 3'-5'-exoribonuclease that specifically recognizes RNAs polyuridylated at their 3' end and mediates their degradation. Component of an exosome-independent RNA degradation pathway that mediates degradation of cytoplasmic mRNAs that have been deadenylated and subsequently uridylated at their 3'. The polypeptide is DIS3-like exonuclease 2 (SOV) (Arabidopsis thaliana (Mouse-ear cress)).